The following is a 267-amino-acid chain: Large ribosomal subunit protein uL4 (267 aa).

This sequence belongs to the universal ribosomal protein uL4 family. In terms of assembly, part of the 50S ribosomal subunit.

Functionally, one of the primary rRNA binding proteins, this protein initially binds near the 5'-end of the 23S rRNA. It is important during the early stages of 50S assembly. It makes multiple contacts with different domains of the 23S rRNA in the assembled 50S subunit and ribosome. Forms part of the polypeptide exit tunnel. This Saccharolobus solfataricus (strain ATCC 35092 / DSM 1617 / JCM 11322 / P2) (Sulfolobus solfataricus) protein is Large ribosomal subunit protein uL4.